Here is a 388-residue protein sequence, read N- to C-terminus: Deoxyuridine 5'-triphosphate nucleotidohydrolase (388 aa).

Basic and acidic residues predominate over residues 77-88; that stretch reads EEKYDKEQHPGE. Disordered stretches follow at residues 77–96 and 336–388; these read EEKY…SPLP and THTP…PRHP. Residues 351–363 show a composition bias toward acidic residues; sequence VDDDVDETEEDEK.

The protein belongs to the dUTPase family. It depends on Mg(2+) as a cofactor.

The protein resides in the virion. It carries out the reaction dUTP + H2O = dUMP + diphosphate + H(+). It participates in pyrimidine metabolism; dUMP biosynthesis; dUMP from dCTP (dUTP route): step 2/2. Its function is as follows. Involved in nucleotide metabolism: produces dUMP, the immediate precursor of thymidine nucleotides and decreases the intracellular concentration of dUTP to avoid uracil incorporation into viral DNA. The polypeptide is Deoxyuridine 5'-triphosphate nucleotidohydrolase (Human cytomegalovirus (strain AD169) (HHV-5)).